Reading from the N-terminus, the 995-residue chain is Bifunctional glutamine synthetase adenylyltransferase/adenylyl-removing enzyme (995 aa).

The tract at residues 1–474 (MNHSAPGNAD…HYEKLFEGDD (474 aa)) is adenylyl removase. GlnE stretches follow at residues 122 to 333 (RRMK…MKRQ) and 637 to 853 (SYEE…MRRA). The interval 479–995 (AKLPALDYSA…LEGTSPASAR (517 aa)) is adenylyl transferase.

It belongs to the GlnE family. It depends on Mg(2+) as a cofactor.

It catalyses the reaction [glutamine synthetase]-O(4)-(5'-adenylyl)-L-tyrosine + phosphate = [glutamine synthetase]-L-tyrosine + ADP. The catalysed reaction is [glutamine synthetase]-L-tyrosine + ATP = [glutamine synthetase]-O(4)-(5'-adenylyl)-L-tyrosine + diphosphate. Functionally, involved in the regulation of glutamine synthetase GlnA, a key enzyme in the process to assimilate ammonia. When cellular nitrogen levels are high, the C-terminal adenylyl transferase (AT) inactivates GlnA by covalent transfer of an adenylyl group from ATP to specific tyrosine residue of GlnA, thus reducing its activity. Conversely, when nitrogen levels are low, the N-terminal adenylyl removase (AR) activates GlnA by removing the adenylyl group by phosphorolysis, increasing its activity. The regulatory region of GlnE binds the signal transduction protein PII (GlnB) which indicates the nitrogen status of the cell. The chain is Bifunctional glutamine synthetase adenylyltransferase/adenylyl-removing enzyme from Bradyrhizobium diazoefficiens (strain JCM 10833 / BCRC 13528 / IAM 13628 / NBRC 14792 / USDA 110).